Here is a 395-residue protein sequence, read N- to C-terminus: WW domain-containing transcription regulator protein 1 (395 aa).

Residue Lys-46 forms a Glycyl lysine isopeptide (Lys-Gly) (interchain with G-Cter in ubiquitin) linkage. The segment at 52–116 is disordered; the sequence is FFKEPDSGSH…AQQHAHLRQQ (65 aa). Residues 61-70 are compositionally biased toward polar residues; that stretch reads HSRQSSTDSS. Position 62 is a phosphoserine (Ser-62). Residue Ser-89 is modified to Phosphoserine; by LATS2. The WW domain maps to 124-157; sequence LPLPPGWEMTFTATGQRYFLNHIEKITTWQDPRK. A required for interaction with PALS1 region spans residues 221-395; it reads PNALTTQQQQ…NKSEPFLTWL (175 aa). Residues 224–258 are a coiled coil; that stretch reads LTTQQQQQQKLRLQRIQMERERIRMRQEELMRQEA. Residues 277–293 show a composition bias toward polar residues; that stretch reads PAMSTDMRSVTNSSSDP. Residues 277 to 308 are disordered; that stretch reads PAMSTDMRSVTNSSSDPFLNGGPYHSREQSTD. The residue at position 290 (Ser-290) is a Phosphoserine. Ser-306 bears the Phosphoserine; by LATS2 mark. Residues 389-395 carry the PDZ-binding motif; it reads EPFLTWL.

As to quaternary structure, binds to SLC9A3R2 via the PDZ motif at the plasma membrane. Binds to YWHAZ in vivo and in vitro through the phosphoserine-binding motif RSHSSP. Interacts (via coiled-coil domain) with SMAD2 (via MH1 domain), SMAD3 and SMAD4. Interacts with MED15. Interacts with PAX8 and NKX2-1. Interacts with TEAD1, TEAD2, TEAD3 and TEAD4. Interacts (via WW domain) with PALS1. Interacts with LATS1. Interacts with YAP1 (when phosphorylated at 'Ser-112'). Interacts (via WW domain) with PRRG4 (via cytoplasmic domain). Interacts (via WW domain) with AMOTL2 (via PPXY motif); the interaction promotes WWTR1/TAZ localization to the cytoplasm and tight junctions, thereby inhibiting its transcriptional coactivator properties. Interacts (via WW domain) with AMOT; the interaction facilitates translocation of WWTR1/TAZ to the cytoplasm. In terms of processing, phosphorylated by LATS2 and STK3/MST2. Phosphorylation by LATS2 results in creation of 14-3-3 binding sites, retention in the cytoplasm, and functional inactivation. Phosphorylation results in the inhibition of transcriptional coactivation through YWHAZ-mediated nuclear export. Ubiquitinated at Lys-46; leading to proteasomal degradation. Deubiquitinated and stabilized by UCHL1 at Lys-46; leading to inhibition of osteoclastogenesis. As to expression, highly expressed in kidney, heart, placenta and lung.

It localises to the nucleus. The protein localises to the cytoplasm. It is found in the cell membrane. The protein resides in the cell junction. Its subcellular location is the tight junction. Functionally, transcriptional coactivator which acts as a downstream regulatory target in the Hippo signaling pathway that plays a pivotal role in organ size control and tumor suppression by restricting proliferation and promoting apoptosis. The core of this pathway is composed of a kinase cascade wherein STK3/MST2 and STK4/MST1, in complex with its regulatory protein SAV1, phosphorylates and activates LATS1/2 in complex with its regulatory protein MOB1, which in turn phosphorylates and inactivates YAP1 oncoprotein and WWTR1/TAZ. WWTR1 enhances PAX8 and NKX2-1/TTF1-dependent gene activation. In conjunction with YAP1, involved in the regulation of TGFB1-dependent SMAD2 and SMAD3 nuclear accumulation. Plays a key role in coupling SMADs to the transcriptional machinery such as the mediator complex. Regulates embryonic stem-cell self-renewal, promotes cell proliferation and epithelial-mesenchymal transition. The sequence is that of WW domain-containing transcription regulator protein 1 from Mus musculus (Mouse).